Here is a 364-residue protein sequence, read N- to C-terminus: Aminomethyltransferase (364 aa).

Belongs to the GcvT family. As to quaternary structure, the glycine cleavage system is composed of four proteins: P, T, L and H.

The catalysed reaction is N(6)-[(R)-S(8)-aminomethyldihydrolipoyl]-L-lysyl-[protein] + (6S)-5,6,7,8-tetrahydrofolate = N(6)-[(R)-dihydrolipoyl]-L-lysyl-[protein] + (6R)-5,10-methylene-5,6,7,8-tetrahydrofolate + NH4(+). The glycine cleavage system catalyzes the degradation of glycine. This is Aminomethyltransferase from Shewanella putrefaciens (strain CN-32 / ATCC BAA-453).